We begin with the raw amino-acid sequence, 907 residues long: Clathrin coat assembly protein AP180 (907 aa).

The ENTH domain maps to Gln-14 to Phe-145. Disordered regions lie at residues Leu-285–Pro-326, Thr-342–Gly-380, Ser-393–Thr-414, and Val-505–Pro-525. A phosphoserine mark is found at Ser-296, Ser-300, and Ser-306. Polar residues predominate over residues Leu-302 to Thr-324. O-linked (GlcNAc) threonine glycosylation occurs at Thr-310. A Phosphoserine modification is found at Ser-313. A Phosphothreonine modification is found at Thr-317. Low complexity predominate over residues Val-505–Ala-515. A compositionally biased stretch (pro residues) spans Pro-516–Pro-525. Phosphoserine is present on residues Ser-596, Ser-602, Ser-623, Ser-629, and Ser-763. Arg-865 bears the Asymmetric dimethylarginine; alternate mark. Omega-N-methylarginine; alternate is present on Arg-865. The disordered stretch occupies residues Pro-867–Leu-907. Positions Pro-893–Leu-907 are enriched in basic and acidic residues.

The protein belongs to the PICALM/SNAP91 family. Binds AP2A2. Interacts with AP2B1; clathrin competes with SNAP91. Post-translationally, thr-310 can be modified by the addition of N-acetylglucosamine which can be further phosphorylated. There is no evidence for direct Thr-310 phosphorylation.

It localises to the cell membrane. The protein resides in the membrane. Its subcellular location is the coated pit. Its function is as follows. Adaptins are components of the adapter complexes which link clathrin to receptors in coated vesicles. Clathrin-associated protein complexes are believed to interact with the cytoplasmic tails of membrane proteins, leading to their selection and concentration. Binding of AP180 to clathrin triskelia induces their assembly into 60-70 nm coats. This chain is Clathrin coat assembly protein AP180 (SNAP91), found in Homo sapiens (Human).